The chain runs to 469 residues: Trehalose-6-phosphate synthase (469 aa).

R10 contributes to the D-glucose 6-phosphate binding site. 22-23 contacts UDP-alpha-D-glucose; the sequence is GG. D-glucose 6-phosphate-binding residues include Y77 and D131. R262 and K267 together coordinate UDP-alpha-D-glucose. R300 contributes to the D-glucose 6-phosphate binding site. A UDP-alpha-D-glucose-binding site is contributed by 365–369; that stretch reads LVAKE.

The protein belongs to the glycosyltransferase 20 family. As to quaternary structure, homotetramer.

The catalysed reaction is D-glucose 6-phosphate + UDP-alpha-D-glucose = alpha,alpha-trehalose 6-phosphate + UDP + H(+). It participates in glycan biosynthesis; trehalose biosynthesis. Functionally, probably involved in the osmoprotection via the biosynthesis of trehalose. Catalyzes the transfer of glucose from UDP-alpha-D-glucose (UDP-Glc) to D-glucose 6-phosphate (Glc-6-P) to form trehalose-6-phosphate. Acts with retention of the anomeric configuration of the UDP-sugar donor. This Sodalis glossinidius (strain morsitans) protein is Trehalose-6-phosphate synthase.